Reading from the N-terminus, the 100-residue chain is Large ribosomal subunit protein uL23 (100 aa).

This sequence belongs to the universal ribosomal protein uL23 family. As to quaternary structure, part of the 50S ribosomal subunit. Contacts protein L29, and trigger factor when it is bound to the ribosome.

Functionally, one of the early assembly proteins it binds 23S rRNA. One of the proteins that surrounds the polypeptide exit tunnel on the outside of the ribosome. Forms the main docking site for trigger factor binding to the ribosome. This chain is Large ribosomal subunit protein uL23, found in Mycolicibacterium paratuberculosis (strain ATCC BAA-968 / K-10) (Mycobacterium paratuberculosis).